The sequence spans 485 residues: MTITPQQLQAMLPLLIVGLTVVVVMLSIAWRRDHFINATLTVIGLNLALLSLYFVGQVGPLDVTPLMRVDGYAMFYIGLVIVASLATSTFAYPWLNGYPDNREEFYLLVLIATMGGILLASANHLASLFLGIELISLPLFGLIGYAYRQKRSLEASIKYMLLSAAASSFLLFGMALLYAESGSLSFAGLGKSLSDSMIHQPLILAGLGMMIVGLGFKLSLVPFQLWTPDVYQGAPAPVSTFLATASKIAIFAVVMRLFLYAPAADSEAVRLVLSLIAVASILFGNLMAISQTNIKRLLGYSSIAHLGYLLIALVAVQTHQLALETAGVYLAGYLFSSLGAFGVVSLMSSPYKGPDAESLFSYRGLFWHKPILSAVMTVMMLSLAGIPMTLGFIGKFFVVAMGVSANLWWLTGAVVLGSAIGLYYYLRVTVSLYLSAPETLVRDTPSNWALTAGGVVVLISAILVLVLGIYPQPLISLVQLAQPLM.

14 consecutive transmembrane segments (helical) span residues 10–30 (AMLP…SIAW), 35–55 (FINA…LYFV), 75–95 (FYIG…YPWL), 104–124 (EFYL…SANH), 125–145 (LASL…LIGY), 159–179 (YMLL…LLYA), 203–223 (ILAG…LVPF), 235–255 (PAPV…AVVM), 271–291 (LVLS…AISQ), 297–317 (LLGY…VAVQ), 327–347 (GVYL…VSLM), 374–394 (AVMT…GFIG), 408–427 (WWLT…YYLR), and 449–469 (ALTA…VLGI).

Belongs to the complex I subunit 2 family. In terms of assembly, NDH-1 is composed of 13 different subunits. Subunits NuoA, H, J, K, L, M, N constitute the membrane sector of the complex.

The protein localises to the cell inner membrane. The enzyme catalyses a quinone + NADH + 5 H(+)(in) = a quinol + NAD(+) + 4 H(+)(out). In terms of biological role, NDH-1 shuttles electrons from NADH, via FMN and iron-sulfur (Fe-S) centers, to quinones in the respiratory chain. The immediate electron acceptor for the enzyme in this species is believed to be ubiquinone. Couples the redox reaction to proton translocation (for every two electrons transferred, four hydrogen ions are translocated across the cytoplasmic membrane), and thus conserves the redox energy in a proton gradient. This Yersinia enterocolitica serotype O:8 / biotype 1B (strain NCTC 13174 / 8081) protein is NADH-quinone oxidoreductase subunit N.